The sequence spans 303 residues: Acetylglutamate kinase (303 aa).

Substrate contacts are provided by residues 76-77 (GG), Arg98, and Asn192.

The protein belongs to the acetylglutamate kinase family. ArgB subfamily.

It is found in the cytoplasm. The catalysed reaction is N-acetyl-L-glutamate + ATP = N-acetyl-L-glutamyl 5-phosphate + ADP. The protein operates within amino-acid biosynthesis; L-arginine biosynthesis; N(2)-acetyl-L-ornithine from L-glutamate: step 2/4. Its function is as follows. Catalyzes the ATP-dependent phosphorylation of N-acetyl-L-glutamate. This chain is Acetylglutamate kinase, found in Chlorobium phaeobacteroides (strain DSM 266 / SMG 266 / 2430).